The following is a 547-amino-acid chain: MMALVCDTAVDDIEDMVRITDVTPLQRQAARKSVVPRARKHKQETGEQMQTDSVIPGMQKVWLKTWGCSHNSSDGEYMAGQLAVAGYQITEDSSDADLWLLNSCTVKSPAEDHFRNAIRKAQEQNKKVVLAGCVPQAQPRMDYIKDLSIIGVQQIDRVVEVVDEAIKGHSVRLLGQKKEKGKRLGGARLDLPKIRKNPLIEIISINTGCLNACTYCKTKHARGDLASYPVEELVERVRQSFQEGVCEIWLTSEDTGAYGRDIGSDLPTLLWRLVEEIPEGAMLRLGMTNPPYILEHLEEMSRILQHPRVFSFLHVPLQSASDSVLMEMRREYCCADFTHLVDYLKERVPGITIATDIICGFPGETDEDFEQTLALVRRYRFPSLFINQFYPRPGTPAALMQQLPAHVKKQRTKELSALFHSYRPYDHKMGEQQQVLVTEESFDSQYYVAHNKFYEQVLVPKRPEYLGKMVQVEVYECGKHYMKGRPLEEAPLRTAYTTAPLLKGQVSGHTQAGVCEPQCWMPDGMRILAVVLLLSAVLLALLMEKLL.

The tract at residues 30-51 (ARKSVVPRARKHKQETGEQMQT) is disordered. Residues 59–167 (QKVWLKTWGC…VVEVVDEAIK (109 aa)) form the MTTase N-terminal domain. [4Fe-4S] cluster-binding residues include Cys68, Cys104, Cys133, Cys209, Cys213, and Cys216. Positions 195-426 (RKNPLIEIIS…ALFHSYRPYD (232 aa)) constitute a Radical SAM core domain. Residues 426–488 (DHKMGEQQQV…KHYMKGRPLE (63 aa)) enclose the TRAM domain. A helical membrane pass occupies residues 527 to 547 (ILAVVLLLSAVLLALLMEKLL).

The protein belongs to the methylthiotransferase family. CDKAL1 subfamily. It depends on [4Fe-4S] cluster as a cofactor.

The protein resides in the endoplasmic reticulum membrane. The catalysed reaction is N(6)-L-threonylcarbamoyladenosine(37) in tRNA + (sulfur carrier)-SH + AH2 + 2 S-adenosyl-L-methionine = 2-methylsulfanyl-N(6)-L-threonylcarbamoyladenosine(37) in tRNA + (sulfur carrier)-H + 5'-deoxyadenosine + L-methionine + A + S-adenosyl-L-homocysteine + 2 H(+). Catalyzes the methylthiolation of N6-threonylcarbamoyladenosine (t(6)A), leading to the formation of 2-methylthio-N6-threonylcarbamoyladenosine (ms(2)t(6)A) at position 37 in tRNAs that read codons beginning with adenine. In Danio rerio (Zebrafish), this protein is Threonylcarbamoyladenosine tRNA methylthiotransferase (cdkal1).